A 1433-amino-acid polypeptide reads, in one-letter code: DNA-directed RNA polymerase subunit beta' (1433 aa).

Residues Cys66, Cys68, Cys81, and Cys84 each coordinate Zn(2+). Residues Asp474, Asp476, and Asp478 each coordinate Mg(2+). Zn(2+) contacts are provided by Cys823, Cys897, Cys904, and Cys907.

It belongs to the RNA polymerase beta' chain family. As to quaternary structure, the RNAP catalytic core consists of 2 alpha, 1 beta, 1 beta' and 1 omega subunit. When a sigma factor is associated with the core the holoenzyme is formed, which can initiate transcription. Requires Mg(2+) as cofactor. It depends on Zn(2+) as a cofactor.

It carries out the reaction RNA(n) + a ribonucleoside 5'-triphosphate = RNA(n+1) + diphosphate. Functionally, DNA-dependent RNA polymerase catalyzes the transcription of DNA into RNA using the four ribonucleoside triphosphates as substrates. The polypeptide is DNA-directed RNA polymerase subunit beta' (Amoebophilus asiaticus (strain 5a2)).